A 393-amino-acid chain; its full sequence is SET domain-containing protein DDB_G0283443 (393 aa).

Positions 17-312 constitute an SET domain; the sequence is KKIEINETLE…KGDELSISYI (296 aa).

The protein belongs to the class V-like SAM-binding methyltransferase superfamily.

Probable methyltransferase. The sequence is that of SET domain-containing protein DDB_G0283443 from Dictyostelium discoideum (Social amoeba).